The chain runs to 545 residues: ATP synthase subunit alpha (545 aa).

173–180 is a binding site for ATP; the sequence is GDRKTGKT.

The protein belongs to the ATPase alpha/beta chains family. As to quaternary structure, F-type ATPases have 2 components, CF(1) - the catalytic core - and CF(0) - the membrane proton channel. CF(1) has five subunits: alpha(3), beta(3), gamma(1), delta(1), epsilon(1). CF(0) has three main subunits: a(1), b(2) and c(9-12). The alpha and beta chains form an alternating ring which encloses part of the gamma chain. CF(1) is attached to CF(0) by a central stalk formed by the gamma and epsilon chains, while a peripheral stalk is formed by the delta and b chains.

It is found in the cell membrane. It catalyses the reaction ATP + H2O + 4 H(+)(in) = ADP + phosphate + 5 H(+)(out). Its function is as follows. Produces ATP from ADP in the presence of a proton gradient across the membrane. The alpha chain is a regulatory subunit. This is ATP synthase subunit alpha from Renibacterium salmoninarum (strain ATCC 33209 / DSM 20767 / JCM 11484 / NBRC 15589 / NCIMB 2235).